The following is a 245-amino-acid chain: UDP-N-acetyl-D-mannosaminuronic acid transferase (245 aa).

This sequence belongs to the glycosyltransferase 26 family.

The enzyme catalyses UDP-N-acetyl-alpha-D-mannosaminouronate + N-acetyl-alpha-D-glucosaminyl-di-trans,octa-cis-undecaprenyl diphosphate = beta-D-ManNAcA-(1-&gt;4)-alpha-D-GlcNAc-di-trans,octa-cis-undecaprenyl diphosphate + UDP + H(+). Its pathway is bacterial outer membrane biogenesis; enterobacterial common antigen biosynthesis. Its function is as follows. Catalyzes the synthesis of Und-PP-GlcNAc-ManNAcA (Lipid II), the second lipid-linked intermediate involved in enterobacterial common antigen (ECA) synthesis. The polypeptide is UDP-N-acetyl-D-mannosaminuronic acid transferase (Proteus mirabilis (strain HI4320)).